A 317-amino-acid chain; its full sequence is tRNA dimethylallyltransferase (317 aa).

19-26 (GPTASGKS) lines the ATP pocket. 21-26 (TASGKS) contacts substrate. Residues 44 to 47 (DSMQ) are interaction with substrate tRNA.

This sequence belongs to the IPP transferase family. Monomer. Mg(2+) is required as a cofactor.

It carries out the reaction adenosine(37) in tRNA + dimethylallyl diphosphate = N(6)-dimethylallyladenosine(37) in tRNA + diphosphate. Functionally, catalyzes the transfer of a dimethylallyl group onto the adenine at position 37 in tRNAs that read codons beginning with uridine, leading to the formation of N6-(dimethylallyl)adenosine (i(6)A). This Methylorubrum extorquens (strain CM4 / NCIMB 13688) (Methylobacterium extorquens) protein is tRNA dimethylallyltransferase.